Consider the following 302-residue polypeptide: D-alanine--D-alanine ligase B (302 aa).

In terms of domain architecture, ATP-grasp spans 99–294 (KKVLKAENIR…YSKFIDLIIE (196 aa)). 126–181 (IEEIGYPVFVKPNNGGSSVATFKVYKKEDIKNSVMEGLKYDEEVIIESFIKGREIT) provides a ligand contact to ATP. Asp-248, Glu-261, and Asn-263 together coordinate Mg(2+).

Belongs to the D-alanine--D-alanine ligase family. Mg(2+) is required as a cofactor. It depends on Mn(2+) as a cofactor.

The protein resides in the cytoplasm. It carries out the reaction 2 D-alanine + ATP = D-alanyl-D-alanine + ADP + phosphate + H(+). It functions in the pathway cell wall biogenesis; peptidoglycan biosynthesis. Cell wall formation. This chain is D-alanine--D-alanine ligase B, found in Clostridium perfringens (strain 13 / Type A).